Here is a 362-residue protein sequence, read N- to C-terminus: D-alanine--D-alanine ligase (362 aa).

An ATP-grasp domain is found at 134-345; that stretch reads KILAQRAGVP…YPDLITRLIR (212 aa). 170 to 225 contacts ATP; the sequence is GQLGTSNLFVKPSNQGSSVGITHVTDDSNYAEALAEAFKYDDKVLVEEGIVGTEVE. Mg(2+)-binding residues include Asp-298, Glu-312, and Asn-314.

Belongs to the D-alanine--D-alanine ligase family. Mg(2+) serves as cofactor. Requires Mn(2+) as cofactor.

It localises to the cytoplasm. The catalysed reaction is 2 D-alanine + ATP = D-alanyl-D-alanine + ADP + phosphate + H(+). It functions in the pathway cell wall biogenesis; peptidoglycan biosynthesis. Its function is as follows. Cell wall formation. This is D-alanine--D-alanine ligase from Lactobacillus delbrueckii subsp. bulgaricus (strain ATCC BAA-365 / Lb-18).